Reading from the N-terminus, the 145-residue chain is MEITKEIFSLIAAVMLLLGSFIALISAIGIVKFQDVFLRSHAATKSSTLSVLLTLIGVLIYFIVNTGFFSVRLLLSLVFINLTSPVGMHLVARAAYRNGAYMYRKNDAHTHASILLSSNEQNSTEALQLRAEKREEHRKKWYQND.

Transmembrane regions (helical) follow at residues 11 to 31, 51 to 71, and 72 to 92; these read IAAV…IGIV, VLLT…FFSV, and RLLL…HLVA.

This sequence belongs to the CPA3 antiporters (TC 2.A.63) subunit G family. In terms of assembly, may form a heterooligomeric complex that consists of seven subunits: mnhA2, mnhB2, mnhC2, mnhD2, mnhE2, mnhF2 and mnhG2.

It is found in the cell membrane. The polypeptide is Putative antiporter subunit mnhG2 (mnhG2) (Staphylococcus aureus (strain COL)).